The following is a 23-amino-acid chain: Fimbrial protein (23 aa).

The cysteines at positions 8 and 21 are disulfide-linked.

Belongs to the N-Me-Phe pilin family. The pili are polar flexible filaments of about 5.4 nanometers diameter and 2.5 micrometers average length; they consist of only a single polypeptide chain arranged in a helical configuration of five subunits per turn in the assembled pilus.

Its subcellular location is the fimbrium. This Pseudomonas aeruginosa protein is Fimbrial protein (pil).